A 332-amino-acid polypeptide reads, in one-letter code: Ornithine carbamoyltransferase 1, catabolic (332 aa).

Carbamoyl phosphate contacts are provided by residues 56 to 59, Gln-83, Arg-107, and 134 to 137; these read STRT and HPTQ. L-ornithine-binding positions include Asn-167, Asp-231, and 235 to 236; that span reads SM. Carbamoyl phosphate contacts are provided by residues 273–274 and Arg-318; that span reads CL.

It belongs to the aspartate/ornithine carbamoyltransferase superfamily. OTCase family.

Its subcellular location is the cytoplasm. It carries out the reaction carbamoyl phosphate + L-ornithine = L-citrulline + phosphate + H(+). It participates in amino-acid degradation; L-arginine degradation via ADI pathway; carbamoyl phosphate from L-arginine: step 2/2. In terms of biological role, reversibly catalyzes the transfer of the carbamoyl group from carbamoyl phosphate (CP) to the N(epsilon) atom of ornithine (ORN) to produce L-citrulline. This chain is Ornithine carbamoyltransferase 1, catabolic (arcB1), found in Streptococcus agalactiae serotype III (strain NEM316).